The sequence spans 399 residues: Large envelope protein (399 aa).

At Met1 the chain carries N-acetylmethionine. Gly2 carries the N-myristoyl glycine; by host lipid modification. Positions 2 to 118 (GLSWTVPLEW…PPLRDTHPQA (117 aa)) are pre-S1. Residues 2–173 (GLSWTVPLEW…FSRIGDPAPN (172 aa)) form a pre-S region. Residues 2–180 (GLSWTVPLEW…APNMESITSG (179 aa)) are Virion surface; in external conformation-facing. Topologically, residues 2–252 (GLSWTVPLEW…PGYRWMCLRR (251 aa)) are intravirion; in internal conformation. A glycan (N-linked (GlcNAc...) asparagine) is linked at Ser4. The segment at 85-110 (KTLPADPPPASTNRQSGRQPTPITPP) is disordered. Positions 95–105 (STNRQSGRQPT) are enriched in polar residues. The interval 119–173 (MQWNSTTFHQALQDPRVRGLYFPAGGSSSGTVNPVPTTASLISSIFSRIGDPAPN) is pre-S2. Residues 181–201 (FLGPLLVLQAGFFLLTKILTI) form a helical membrane-spanning segment. Topologically, residues 202–252 (PQSLDSWWTSLNFLGGAPVCLGQNSQSPTSNHSPTSCPPICPGYRWMCLRR) are intravirion; in external conformation. The helical transmembrane segment at 253–273 (FIIFLFILLLCLIFLLVLLDY) threads the bilayer. Residues 274-347 (QGMLPVCPLI…WASARFSWLS (74 aa)) lie on the Virion surface side of the membrane. Residue Asn319 is glycosylated (N-linked (GlcNAc...) asparagine; by host). A helical membrane pass occupies residues 348-368 (LLVPFVQWFAGLSPTVWLSVI). Topologically, residues 369-374 (WMMWYW) are intravirion. The chain crosses the membrane as a helical span at residues 375–397 (GPSLYDILSPFIPLLPIFFCLWV). The Virion surface segment spans residues 398–399 (YI).

The protein belongs to the orthohepadnavirus major surface antigen family. In its internal form (Li-HBsAg), interacts with the capsid protein and with the isoform S. Interacts with host chaperone CANX. As to quaternary structure, associates with host chaperone CANX through its pre-S2 N glycan; this association may be essential for isoform M proper secretion. In terms of assembly, interacts with isoform L. Interacts with the antigens of satellite virus HDV (HDVAgs); this interaction is required for encapsidation of HDV genomic RNA. Post-translationally, isoform M is N-terminally acetylated by host at a ratio of 90%, and N-glycosylated by host at the pre-S2 region. In terms of processing, myristoylated.

The protein localises to the virion membrane. Functionally, the large envelope protein exists in two topological conformations, one which is termed 'external' or Le-HBsAg and the other 'internal' or Li-HBsAg. In its external conformation the protein attaches the virus to cell receptors and thereby initiating infection. This interaction determines the species specificity and liver tropism. This attachment induces virion internalization predominantly through caveolin-mediated endocytosis. The large envelope protein also assures fusion between virion membrane and endosomal membrane. In its internal conformation the protein plays a role in virion morphogenesis and mediates the contact with the nucleocapsid like a matrix protein. The middle envelope protein plays an important role in the budding of the virion. It is involved in the induction of budding in a nucleocapsid independent way. In this process the majority of envelope proteins bud to form subviral lipoprotein particles of 22 nm of diameter that do not contain a nucleocapsid. The polypeptide is Large envelope protein (Homo sapiens (Human)).